A 541-amino-acid polypeptide reads, in one-letter code: Glycogen synthase (541 aa).

Residue Lys17 participates in ADP-alpha-D-glucose binding. The tract at residues 497 to 541 (LARPASPPDTAPVGKPARRRRTTALSTTARAHPVARAAGREKIRA) is disordered.

Belongs to the glycosyltransferase 1 family. Bacterial/plant glycogen synthase subfamily.

It carries out the reaction [(1-&gt;4)-alpha-D-glucosyl](n) + ADP-alpha-D-glucose = [(1-&gt;4)-alpha-D-glucosyl](n+1) + ADP + H(+). It functions in the pathway glycan biosynthesis; glycogen biosynthesis. Functionally, synthesizes alpha-1,4-glucan chains using ADP-glucose. The polypeptide is Glycogen synthase (Ralstonia nicotianae (strain ATCC BAA-1114 / GMI1000) (Ralstonia solanacearum)).